A 573-amino-acid chain; its full sequence is MAKQIKGIAASDGVAIAKAYLLVEPDLSFDNESVTDTDAEVAKFNGALNKSKVELTKIRNNAEKQLGADKAAIFDAHLLVLEDPELIQPIEDKIKNESVNAAQALTDVSNQFITIFESMDNEYMAERAADIRDVSKRVLAHILGVELPNPSIVDESVVIIGNDLTPSDTAQLNKEYVQGFVTNIGGRTSHSAIMSRSLEIPAVVGTKSITEEVEAGDTIVVDGMTGDVLINPSDEVIAEYQEKRENFFKDKQELQKLRDAESVTADGHHVELAANIGTPNDLPGVIENGAEGIGLYRTEFLYMGRDQMPTEEEQFEAYKAVLEAMKGKRVVVRTLDIGGDKELPYLDLPEEMNPFLGYRAIRLCLDQPEIFRPQLRALLRASVFGKLNIMFPMVATIQEFRDAKALLEEERANLKNEGYEVADDIELGIMVEIPSTAALADIFAKEVDFFSIGTNDLIQYTMAADRMSERVSYLYQPYNPAILRLVKQVIEASHAEGKWTGMCGEMAGDQTAIPLLLGLGLDEFSMSATSILKARRLIRSLNESEMKELSERAVQCATSEEVVDLVEEYTKNA.

H190 (tele-phosphohistidine intermediate) is an active-site residue. 2 residues coordinate substrate: R297 and R333. Residues E432 and D456 each coordinate Mg(2+). 455–456 (ND) serves as a coordination point for phosphoenolpyruvate. Position 466 (R466) interacts with substrate. C503 (proton donor) is an active-site residue.

The protein belongs to the PEP-utilizing enzyme family. In terms of assembly, homodimer. The cofactor is Mg(2+).

It localises to the cytoplasm. The enzyme catalyses L-histidyl-[protein] + phosphoenolpyruvate = N(pros)-phospho-L-histidyl-[protein] + pyruvate. Its function is as follows. General (non sugar-specific) component of the phosphoenolpyruvate-dependent sugar phosphotransferase system (sugar PTS). This major carbohydrate active-transport system catalyzes the phosphorylation of incoming sugar substrates concomitantly with their translocation across the cell membrane. Enzyme I transfers the phosphoryl group from phosphoenolpyruvate (PEP) to the phosphoryl carrier protein (HPr). This chain is Phosphoenolpyruvate-protein phosphotransferase (ptsI), found in Staphylococcus carnosus (strain TM300).